A 62-amino-acid polypeptide reads, in one-letter code: UPF0291 protein CLD_1956 (62 aa).

This sequence belongs to the UPF0291 family.

The protein resides in the cytoplasm. The polypeptide is UPF0291 protein CLD_1956 (Clostridium botulinum (strain Okra / Type B1)).